The chain runs to 304 residues: Glutamyl-Q tRNA(Asp) synthetase (304 aa).

L-glutamate contacts are provided by residues 14–18 and Glu-50; that span reads RFAPS. Positions 17–27 match the 'HIGH' region motif; that stretch reads PSPSGPLHFGS. Zn(2+) contacts are provided by Cys-106, Cys-108, Tyr-120, and Cys-124. L-glutamate contacts are provided by Tyr-178 and Arg-196. The short motif at 234–238 is the 'KMSKS' region element; that stretch reads KLSKQ. Lys-237 is an ATP binding site.

This sequence belongs to the class-I aminoacyl-tRNA synthetase family. GluQ subfamily. Zn(2+) is required as a cofactor.

Catalyzes the tRNA-independent activation of glutamate in presence of ATP and the subsequent transfer of glutamate onto a tRNA(Asp). Glutamate is transferred on the 2-amino-5-(4,5-dihydroxy-2-cyclopenten-1-yl) moiety of the queuosine in the wobble position of the QUC anticodon. This Vibrio cholerae serotype O1 (strain ATCC 39315 / El Tor Inaba N16961) protein is Glutamyl-Q tRNA(Asp) synthetase.